The chain runs to 61 residues: Small ribosomal subunit protein uS14 (61 aa).

Zn(2+) is bound by residues C24, C27, C40, and C43.

It belongs to the universal ribosomal protein uS14 family. Zinc-binding uS14 subfamily. Part of the 30S ribosomal subunit. Contacts proteins S3 and S10. Requires Zn(2+) as cofactor.

Its function is as follows. Binds 16S rRNA, required for the assembly of 30S particles and may also be responsible for determining the conformation of the 16S rRNA at the A site. The protein is Small ribosomal subunit protein uS14 of Dictyoglomus thermophilum (strain ATCC 35947 / DSM 3960 / H-6-12).